The following is a 124-amino-acid chain: Large ribosomal subunit protein bL12 (124 aa).

Belongs to the bacterial ribosomal protein bL12 family. In terms of assembly, homodimer. Part of the ribosomal stalk of the 50S ribosomal subunit. Forms a multimeric L10(L12)X complex, where L10 forms an elongated spine to which 2 to 4 L12 dimers bind in a sequential fashion. Binds GTP-bound translation factors.

Functionally, forms part of the ribosomal stalk which helps the ribosome interact with GTP-bound translation factors. Is thus essential for accurate translation. This Phytoplasma australiense protein is Large ribosomal subunit protein bL12.